Here is a 91-residue protein sequence, read N- to C-terminus: Em-like protein (91 aa).

2 stretches are compositionally biased toward basic and acidic residues: residues 1 to 18 (MEQQ…REGE) and 31 to 51 (DAQE…KEQI). The tract at residues 1–91 (MEQQQDRREL…PIDESKYRHP (91 aa)) is disordered. Residues 62 to 73 (KGGLSSAGGPGG) are compositionally biased toward gly residues. A compositionally biased stretch (basic and acidic residues) spans 75–91 (RASEEGRPIDESKYRHP).

This sequence belongs to the small hydrophilic plant seed protein family.

The sequence is that of Em-like protein from Picea glauca (White spruce).